Consider the following 172-residue polypeptide: MTINQDSFTKEELLACSRGELFGPGNSQLPAPNMLMMDRIVKISEEDGEHGKGVIIAELDITPDLWFFDCHFPGDPVMPGCLGLDAMWQLVGFFLGWCGGPGKGRALGVGEVKFSGQILPTAKKVTYKIDMKRVIKRKLFMGIGDGEVSVDGRVIYQAKDLKVGLFQDTSNF.

Histidine 71 is an active-site residue.

It belongs to the thioester dehydratase family. FabA subfamily. As to quaternary structure, homodimer.

Its subcellular location is the cytoplasm. It catalyses the reaction a (3R)-hydroxyacyl-[ACP] = a (2E)-enoyl-[ACP] + H2O. The catalysed reaction is (3R)-hydroxydecanoyl-[ACP] = (2E)-decenoyl-[ACP] + H2O. It carries out the reaction (2E)-decenoyl-[ACP] = (3Z)-decenoyl-[ACP]. Its pathway is lipid metabolism; fatty acid biosynthesis. Functionally, necessary for the introduction of cis unsaturation into fatty acids. Catalyzes the dehydration of (3R)-3-hydroxydecanoyl-ACP to E-(2)-decenoyl-ACP and then its isomerization to Z-(3)-decenoyl-ACP. Can catalyze the dehydratase reaction for beta-hydroxyacyl-ACPs with saturated chain lengths up to 16:0, being most active on intermediate chain length. In Pseudoalteromonas atlantica (strain T6c / ATCC BAA-1087), this protein is 3-hydroxydecanoyl-[acyl-carrier-protein] dehydratase.